Reading from the N-terminus, the 360-residue chain is Proline-rich protein 11 (360 aa).

Disordered regions lie at residues 20 to 43 (KKKE…SPER) and 174 to 201 (PPTL…PPLA). The residue at position 33 (Thr33) is a Phosphothreonine. Residue Ser40 is modified to Phosphoserine. Pro residues predominate over residues 175–201 (PTLPQPASHFPPPPPPPPLPPPPPPLA). The short motif at 285–291 (LITPGKS) is the Phosphodegron element. Thr287 carries the phosphothreonine modification. Ser291 is modified (phosphoserine). The D-box signature appears at 296-304 (RKLLRKVDV). Residues 316–318 (KEN) carry the KEN box motif. A Phosphodegron motif is present at residues 325-330 (LTPVMT). The tract at residues 340-360 (AHPRSPTPTLPLSTSSFDEQN) is disordered. A Phosphoserine modification is found at Ser344. Residues Thr346 and Thr348 each carry the phosphothreonine modification. A compositionally biased stretch (low complexity) spans 349–360 (LPLSTSSFDEQN).

Post-translationally, ubiquitinated. Rapidly degraded by the proteasome; degradation may involve FBXW7-specific phosphorylated phosphodegron motifs. As to expression, ubiquitously expressed.

The protein localises to the cytoplasm. It is found in the nucleus. Its function is as follows. Plays a critical role in cell cycle progression. This chain is Proline-rich protein 11 (PRR11), found in Homo sapiens (Human).